The following is a 220-amino-acid chain: Thiamine-phosphate synthase (220 aa).

4-amino-2-methyl-5-(diphosphooxymethyl)pyrimidine-binding positions include 38–42 (QYRDK) and Asn-70. Asp-71 and Asp-90 together coordinate Mg(2+). Residue Thr-109 participates in 4-amino-2-methyl-5-(diphosphooxymethyl)pyrimidine binding. Position 135–137 (135–137 (TVS)) interacts with 2-[(2R,5Z)-2-carboxy-4-methylthiazol-5(2H)-ylidene]ethyl phosphate. Lys-138 contributes to the 4-amino-2-methyl-5-(diphosphooxymethyl)pyrimidine binding site. Residues Gly-171 and 191–192 (IS) each bind 2-[(2R,5Z)-2-carboxy-4-methylthiazol-5(2H)-ylidene]ethyl phosphate.

It belongs to the thiamine-phosphate synthase family. The cofactor is Mg(2+).

The catalysed reaction is 2-[(2R,5Z)-2-carboxy-4-methylthiazol-5(2H)-ylidene]ethyl phosphate + 4-amino-2-methyl-5-(diphosphooxymethyl)pyrimidine + 2 H(+) = thiamine phosphate + CO2 + diphosphate. It catalyses the reaction 2-(2-carboxy-4-methylthiazol-5-yl)ethyl phosphate + 4-amino-2-methyl-5-(diphosphooxymethyl)pyrimidine + 2 H(+) = thiamine phosphate + CO2 + diphosphate. It carries out the reaction 4-methyl-5-(2-phosphooxyethyl)-thiazole + 4-amino-2-methyl-5-(diphosphooxymethyl)pyrimidine + H(+) = thiamine phosphate + diphosphate. It functions in the pathway cofactor biosynthesis; thiamine diphosphate biosynthesis; thiamine phosphate from 4-amino-2-methyl-5-diphosphomethylpyrimidine and 4-methyl-5-(2-phosphoethyl)-thiazole: step 1/1. Functionally, condenses 4-methyl-5-(beta-hydroxyethyl)thiazole monophosphate (THZ-P) and 2-methyl-4-amino-5-hydroxymethyl pyrimidine pyrophosphate (HMP-PP) to form thiamine monophosphate (TMP). The protein is Thiamine-phosphate synthase of Agrobacterium fabrum (strain C58 / ATCC 33970) (Agrobacterium tumefaciens (strain C58)).